Reading from the N-terminus, the 442-residue chain is tRNA modification GTPase MnmE (442 aa).

3 residues coordinate (6S)-5-formyl-5,6,7,8-tetrahydrofolate: arginine 22, glutamate 79, and lysine 119. The 151-residue stretch at 216-366 (GIKTCLVGAP…LLEKIKSIFA (151 aa)) folds into the TrmE-type G domain. K(+) is bound at residue asparagine 226. Residues 226 to 231 (NSGKSS), 245 to 251 (SEIPGTT), and 270 to 273 (DTAG) each bind GTP. Residue serine 230 participates in Mg(2+) binding. The K(+) site is built by serine 245, isoleucine 247, and threonine 250. Threonine 251 contacts Mg(2+). Lysine 442 is a (6S)-5-formyl-5,6,7,8-tetrahydrofolate binding site.

Belongs to the TRAFAC class TrmE-Era-EngA-EngB-Septin-like GTPase superfamily. TrmE GTPase family. As to quaternary structure, homodimer. Heterotetramer of two MnmE and two MnmG subunits. Requires K(+) as cofactor.

It localises to the cytoplasm. Functionally, exhibits a very high intrinsic GTPase hydrolysis rate. Involved in the addition of a carboxymethylaminomethyl (cmnm) group at the wobble position (U34) of certain tRNAs, forming tRNA-cmnm(5)s(2)U34. This is tRNA modification GTPase MnmE from Mesomycoplasma hyopneumoniae (strain J / ATCC 25934 / NCTC 10110) (Mycoplasma hyopneumoniae).